We begin with the raw amino-acid sequence, 170 residues long: Ribosome maturation factor RimM (170 aa).

A PRC barrel domain is found at 98–170 (PDEYYWVDLE…LIVVDWDPDF (73 aa)).

It belongs to the RimM family. As to quaternary structure, binds ribosomal protein uS19.

The protein localises to the cytoplasm. Its function is as follows. An accessory protein needed during the final step in the assembly of 30S ribosomal subunit, possibly for assembly of the head region. Essential for efficient processing of 16S rRNA. May be needed both before and after RbfA during the maturation of 16S rRNA. It has affinity for free ribosomal 30S subunits but not for 70S ribosomes. In Xanthomonas oryzae pv. oryzae (strain MAFF 311018), this protein is Ribosome maturation factor RimM.